Consider the following 60-residue polypeptide: Large ribosomal subunit protein bL32 (60 aa).

The protein belongs to the bacterial ribosomal protein bL32 family.

In Streptococcus suis (strain 05ZYH33), this protein is Large ribosomal subunit protein bL32.